A 1072-amino-acid polypeptide reads, in one-letter code: MINPISFRPGPVTFWTTLIYLALLIPIVIINEKTPAAPKTAEPFKGVNLTEAWLDLTTITRAYHPYNSKFNEEVRRYLLEKVETILEENGASWVSDGQMTTVKDGKSAAVTVFDDNVSNSTFVMGKSNGTTFTRTDSINNAAYFEGTNILVYIRGKEDDEGEWWEADYAHGMRRNAKGLTLVNAHYDSVSTGFGATDDGMGVVTALQVLKYFTAPGHQPQRGIVVMLNNGEEDWLYGAHALGQHKLNPFIHTFLNLEGAGAGGRAIVFRATDREVMAAYARTSHPFGTVIASDAFGLGFISSGTDYSVLVDAYGQRGIDLAFFKPRARYHTNQDDTRHTSKGSLWHMLSAAIHTTKQFSGDTGNTFIGQRPDKAHGKVANGRSSNGVWFDLFGKSFVLFGLRGMFAWSLTLLIATPLVLVGITWLLRNLDKDYFFTSTVKTKEHPEYEAVPIGGWKGFFRFPFALGVAVFFTISSALLMNKVNPLIVYSSRYSVWVMMVSIFYFSFWMIMRGANFVRPSALHRGYANLWLFVFGWIVLVAVTALEDRRRIAAGYIFVFLESAIFLSCLISFVELLAVPRKSSYALQVQEDYDGQEHDHNGYQGFRDSTDEPSLRARAESSASAASPPSPTVAQEPSKSKAPAGTTNGLSTAPSVAAHSSQPQPAPTTPIPGRSSGAPSTASRDENESEDDDEPTERTPLVGGNGTNDRGRTTFATTYRRSITALVHGARKMEEDGEPYDHEQEWSGHLPSWAWFFQFLLLGPFMIILAAQTGLMLTDAVYQTGSDGSKLITPYLIIFVFTVLLILPLTPFIHRVTHHIPVFLLVVFIVTLTYNLIAFPFSANNRYKTFFGQYIDVATGDNKVCYTGIEEYVRPIIAELPSASGREVTCGKSLRRGSTISTCCFDGSAVPPKLGSEDDNGLPEDSYADLITINATRSTKRGDSSRTTARIEITADNTKSCFLQFKKPVSALAIENGSGWDDRFGQYPEDGVGLVRLWHREFGKTWVVNAEWKGSETRKEYDENDGTVICMWSDANTPGTIPALDEALQFVPSWAAVTKFSEGLVEGRKAFKIV.

Residues 1-9 (MINPISFRP) are Cytoplasmic-facing. A helical transmembrane segment spans residues 10–30 (GPVTFWTTLIYLALLIPIVII). The Vacuolar portion of the chain corresponds to 31–404 (NEKTPAAPKT…SFVLFGLRGM (374 aa)). Residues N48, N116, N119, and N128 are each glycosylated (N-linked (GlcNAc...) asparagine). Positions 185 and 197 each coordinate Zn(2+). E231 (proton acceptor) is an active-site residue. 3 residues coordinate Zn(2+): E232, E257, and H330. The helical transmembrane segment at 405–425 (FAWSLTLLIATPLVLVGITWL) threads the bilayer. The Cytoplasmic portion of the chain corresponds to 426 to 457 (LRNLDKDYFFTSTVKTKEHPEYEAVPIGGWKG). The helical transmembrane segment at 458–478 (FFRFPFALGVAVFFTISSALL) threads the bilayer. Residues 479–492 (MNKVNPLIVYSSRY) lie on the Vacuolar side of the membrane. The chain crosses the membrane as a helical span at residues 493–513 (SVWVMMVSIFYFSFWMIMRGA). The Cytoplasmic portion of the chain corresponds to 514-523 (NFVRPSALHR). The chain crosses the membrane as a helical span at residues 524 to 544 (GYANLWLFVFGWIVLVAVTAL). Residues 545–554 (EDRRRIAAGY) lie on the Vacuolar side of the membrane. Residues 555 to 575 (IFVFLESAIFLSCLISFVELL) traverse the membrane as a helical segment. The Cytoplasmic segment spans residues 576-747 (AVPRKSSYAL…YDHEQEWSGH (172 aa)). A disordered region spans residues 593-713 (GQEHDHNGYQ…GTNDRGRTTF (121 aa)). The span at 606-617 (DSTDEPSLRARA) shows a compositional bias: basic and acidic residues. Positions 643-661 (GTTNGLSTAPSVAAHSSQP) are enriched in polar residues. The chain crosses the membrane as a helical span at residues 748-768 (LPSWAWFFQFLLLGPFMIILA). Over 769-789 (AQTGLMLTDAVYQTGSDGSKL) the chain is Vacuolar. Residues 790–810 (ITPYLIIFVFTVLLILPLTPF) form a helical membrane-spanning segment. The Cytoplasmic portion of the chain corresponds to 811 to 817 (IHRVTHH). A helical membrane pass occupies residues 818-838 (IPVFLLVVFIVTLTYNLIAFP). Over 839 to 1072 (FSANNRYKTF…VEGRKAFKIV (234 aa)) the chain is Vacuolar. N-linked (GlcNAc...) asparagine glycans are attached at residues N932 and N974.

Belongs to the peptidase M28 family. It depends on Zn(2+) as a cofactor.

Its subcellular location is the vacuole membrane. Functionally, may be involved in vacuolar sorting and osmoregulation. The sequence is that of Vacuolar membrane protease from Neurospora crassa (strain ATCC 24698 / 74-OR23-1A / CBS 708.71 / DSM 1257 / FGSC 987).